The chain runs to 105 residues: Met repressor (105 aa).

Belongs to the MetJ family. As to quaternary structure, homodimer.

The protein localises to the cytoplasm. Its function is as follows. This regulatory protein, when combined with SAM (S-adenosylmethionine) represses the expression of the methionine regulon and of enzymes involved in SAM synthesis. The chain is Met repressor from Serratia proteamaculans (strain 568).